The sequence spans 622 residues: MSPMATDAPAPAATAPELLRNFCIIAHIDHGKSTLADRMLQLTGVVDARAMRAQYLDRMDIERERGITIKSQAVRMPWGYDGTDYALNMIDTPGHVDFTYEVSRSLAACEGAVLLVDAAQGIEAQTLANLYLAMENDLTIIPVLNKIDLPAAQPEKFAEELAKLIGCEPDDCLRVSGKTGVGVEPLLDQIVRQIPAPVGDADAPARAMIFDSVYDTYRGVVTYVRVIDGNLSPREKIVMMSTRATHELLEIGVSSPEPVPSKGLGVGEVGYLITGVKDVRQSKVGDTVTNAAKPSTKALGGYRDPKPMVFSGLYPIDGSDYPLLRDALDKLKLNDAALSYEPETSVALGFGFRIGFLGLLHLEIVRERLEREFNLDLISTAPSVPYEVTLEDKRVVEVTNPSEFPEGKIAEVREPVVRATVLAPSEFIGAVMELCQQRRGELQGMDYLSEDRVEMRYRLPLAEIVFDFFDQLKSRTRGYASLDYDVDGDQAADLVKVDVLLQGEQVDAFSQIVHREKAYGYGVMMAGKLKDLIPRQQFEVPIQAAIGARVIARENVRAIRKDVLAKCYGGDITRKRKLLEKQKEGKKRMKMVGRVEVPQEAFIAALSSDAAGDKAKDKNAKK.

Positions 17–198 constitute a tr-type G domain; the sequence is ELLRNFCIIA…QIVRQIPAPV (182 aa). Residues 29–34 and 145–148 each bind GTP; these read DHGKST and NKID.

Belongs to the TRAFAC class translation factor GTPase superfamily. Classic translation factor GTPase family. LepA subfamily.

The protein resides in the cell membrane. The catalysed reaction is GTP + H2O = GDP + phosphate + H(+). In terms of biological role, required for accurate and efficient protein synthesis under certain stress conditions. May act as a fidelity factor of the translation reaction, by catalyzing a one-codon backward translocation of tRNAs on improperly translocated ribosomes. Back-translocation proceeds from a post-translocation (POST) complex to a pre-translocation (PRE) complex, thus giving elongation factor G a second chance to translocate the tRNAs correctly. Binds to ribosomes in a GTP-dependent manner. In Kineococcus radiotolerans (strain ATCC BAA-149 / DSM 14245 / SRS30216), this protein is Elongation factor 4.